A 364-amino-acid chain; its full sequence is UDP-N-acetylglucosamine--N-acetylmuramyl-(pentapeptide) pyrophosphoryl-undecaprenol N-acetylglucosamine transferase (364 aa).

UDP-N-acetyl-alpha-D-glucosamine is bound by residues 10–12 (TGG), Asn123, Ser198, Ile251, and Gln296.

This sequence belongs to the glycosyltransferase 28 family. MurG subfamily.

The protein localises to the cell membrane. The catalysed reaction is di-trans,octa-cis-undecaprenyl diphospho-N-acetyl-alpha-D-muramoyl-L-alanyl-D-glutamyl-meso-2,6-diaminopimeloyl-D-alanyl-D-alanine + UDP-N-acetyl-alpha-D-glucosamine = di-trans,octa-cis-undecaprenyl diphospho-[N-acetyl-alpha-D-glucosaminyl-(1-&gt;4)]-N-acetyl-alpha-D-muramoyl-L-alanyl-D-glutamyl-meso-2,6-diaminopimeloyl-D-alanyl-D-alanine + UDP + H(+). The protein operates within cell wall biogenesis; peptidoglycan biosynthesis. In terms of biological role, cell wall formation. Catalyzes the transfer of a GlcNAc subunit on undecaprenyl-pyrophosphoryl-MurNAc-pentapeptide (lipid intermediate I) to form undecaprenyl-pyrophosphoryl-MurNAc-(pentapeptide)GlcNAc (lipid intermediate II). The sequence is that of UDP-N-acetylglucosamine--N-acetylmuramyl-(pentapeptide) pyrophosphoryl-undecaprenol N-acetylglucosamine transferase from Exiguobacterium sibiricum (strain DSM 17290 / CCUG 55495 / CIP 109462 / JCM 13490 / 255-15).